The following is a 397-amino-acid chain: Enoyl-[acyl-carrier-protein] reductase [NADH] (397 aa).

NAD(+) contacts are provided by residues 48-53, 74-75, 111-112, and 139-140; these read GASTGY, FE, DA, and VA. Tyr225 contributes to the substrate binding site. The active-site Proton donor is the Tyr235. NAD(+) contacts are provided by residues Lys244 and 273 to 275; that span reads VVT.

It belongs to the TER reductase family. Monomer.

The enzyme catalyses a 2,3-saturated acyl-[ACP] + NAD(+) = a (2E)-enoyl-[ACP] + NADH + H(+). Its pathway is lipid metabolism; fatty acid biosynthesis. Functionally, involved in the final reduction of the elongation cycle of fatty acid synthesis (FAS II). Catalyzes the reduction of a carbon-carbon double bond in an enoyl moiety that is covalently linked to an acyl carrier protein (ACP). This is Enoyl-[acyl-carrier-protein] reductase [NADH] from Burkholderia mallei (strain SAVP1).